The following is a 231-amino-acid chain: Urease accessory protein UreF (231 aa).

It belongs to the UreF family. As to quaternary structure, ureD, UreF and UreG form a complex that acts as a GTP-hydrolysis-dependent molecular chaperone, activating the urease apoprotein by helping to assemble the nickel containing metallocenter of UreC. The UreE protein probably delivers the nickel.

Its subcellular location is the cytoplasm. Functionally, required for maturation of urease via the functional incorporation of the urease nickel metallocenter. This is Urease accessory protein UreF from Marinobacter nauticus (strain ATCC 700491 / DSM 11845 / VT8) (Marinobacter aquaeolei).